We begin with the raw amino-acid sequence, 374 residues long: Isopentenyl-diphosphate delta-isomerase (374 aa).

13–14 (RK) contacts substrate. FMN is bound by residues 71–73 (GMT), Ser-104, and Asn-132. 104–106 (SQR) serves as a coordination point for substrate. Gln-171 contributes to the substrate binding site. Glu-172 is a Mg(2+) binding site. Residues Lys-203, Thr-233, 282–284 (GMR), and 303–304 (AL) each bind FMN.

Belongs to the IPP isomerase type 2 family. Homooctamer. Dimer of tetramers. FMN serves as cofactor. The cofactor is NADPH. Requires Mg(2+) as cofactor.

It is found in the cytoplasm. The catalysed reaction is isopentenyl diphosphate = dimethylallyl diphosphate. Involved in the biosynthesis of isoprenoids. Catalyzes the 1,3-allylic rearrangement of the homoallylic substrate isopentenyl (IPP) to its allylic isomer, dimethylallyl diphosphate (DMAPP). The chain is Isopentenyl-diphosphate delta-isomerase from Thermococcus kodakarensis (strain ATCC BAA-918 / JCM 12380 / KOD1) (Pyrococcus kodakaraensis (strain KOD1)).